Reading from the N-terminus, the 505-residue chain is Maturase K (505 aa).

Belongs to the intron maturase 2 family. MatK subfamily.

It localises to the plastid. Its subcellular location is the chloroplast. In terms of biological role, usually encoded in the trnK tRNA gene intron. Probably assists in splicing its own and other chloroplast group II introns. This is Maturase K from Calycanthus floridus (Eastern sweetshrub).